Here is a 212-residue protein sequence, read N- to C-terminus: Urease accessory protein UreG 2 (212 aa).

Residue 11-18 (GPVGSGKM) coordinates GTP.

The protein belongs to the SIMIBI class G3E GTPase family. UreG subfamily. In terms of assembly, homodimer. UreD, UreF and UreG form a complex that acts as a GTP-hydrolysis-dependent molecular chaperone, activating the urease apoprotein by helping to assemble the nickel containing metallocenter of UreC. The UreE protein probably delivers the nickel.

The protein resides in the cytoplasm. Its function is as follows. Facilitates the functional incorporation of the urease nickel metallocenter. This process requires GTP hydrolysis, probably effectuated by UreG. Functionally, disrupting the ure2 operon has no effect on urease activity, or pathogen survival in BALB/c mice when inoculated by gavage, but confers slightly enhanced resistance to low pH killing in vitro. This Brucella suis biovar 1 (strain 1330) protein is Urease accessory protein UreG 2.